A 1053-amino-acid polypeptide reads, in one-letter code: MAGNDWINSYLEAILDVGPGLDDKKSSLLLRERGRFSPTRYFVEEVITGFDETDLHRSWIRAQATRSPQRRNTRLENMCWRIWNLARQKKQLEGEQAQWMAKRRQERERGRREAVADMSEDLSEGEKGDIVADMSSHGESTRGRLPRISSVETMEAWVSQQRGKKLYIVLISLHGLIRGENMELGRDSDTGGQVKYVVELARALGSMPGVYRVDLLTRQVSSPEVDWSYGEPTELAPISTDGLMTEMGESSGAYIIRIPFGPREKYIPKEQLWPYIPEFVDGALNHIIQMSKVLGEQIGSGYPVWPVAIHGHYADAGDSAALLSGALNVPMLFTGHSLGRDKLEQLLAQGRKSKDEINSTYKIMRRIEAEELTLDASEIVITSTRQEIDEQWRLYDGFDPILERKLRARIKRNVSCYGRFMPRMAVIPPGMEFHHIVPHEGDMDGETEGSEDGKTPDPPIWAEIMRFFSNPRKPMILALARPDPKKNLTTLVKAFGECRPLRDLANLTLIMGNRDNIDEMSSTNSALLLSILKMIDKYDLYGQVAYPKHHKQSDVPDIYRLAAKTKGVFINPAFIEPFGLTLIEAAAYGLPMVATKNGGPVDIHRVLDNGLLVDPHDQQAIADALLKLVADKQLWAKCRANGLKNIHLFSWPEHCKTYLSRIASCKPRQPRWLRSIDDDDENSETDSPSDSLRDIHDISLNLRFSLDGEKNDNKENADNTLDPEVRRSKLENAVLSLSKGALKSTSKSWSSDKADQNPGAGKFPAIRRRRHIFVIAVDCDASSGLSGSVKKIFEAVEKERAEGSIGFILATSFNISEVQSFLLSEGMNPTDFDAYICNSGGDLYYSSFHSEQNPFVVDLYYHSHIEYRWGGEGLRKTLVRWAASIIDKNGENGDHIVVEDEDNSADYCYTFKVCKPGTVPPSKELRKVMRIQALRCHAVYCQNGSRINVIPVLASRSQALRYLYLRWGMDLSKLVVFVGESGDTDYEGLIGGLRKAVIMKGLCTNASSLIHGNRNYPLSDVLPFDSPNVIQADEECSSTEIRCLLEKLAVLKG.

Basic and acidic residues predominate over residues 103 to 115; sequence RRQERERGRREAV. Disordered regions lie at residues 103–127 and 673–693; these read RRQE…EGEK and LRSI…DSLR.

Belongs to the glycosyltransferase 1 family. As to quaternary structure, homodimer or homotetramer.

The catalysed reaction is beta-D-fructose 6-phosphate + UDP-alpha-D-glucose = sucrose 6(F)-phosphate + UDP + H(+). Its pathway is glycan biosynthesis; sucrose biosynthesis; sucrose from D-fructose 6-phosphate and UDP-alpha-D-glucose: step 1/2. Activity is regulated by phosphorylation and moderated by concentration of metabolites and light. In terms of biological role, plays a role in photosynthetic sucrose synthesis by catalyzing the rate-limiting step of sucrose biosynthesis from UDP-glucose and fructose- 6-phosphate. Involved in the regulation of carbon partitioning in the leaves of plants. May regulate the synthesis of sucrose and therefore play a major role as a limiting factor in the export of photoassimilates out of the leaf. Plays a role for sucrose availability that is essential for plant growth and fiber elongation. The sequence is that of Probable sucrose-phosphate synthase (SPS) from Solanum tuberosum (Potato).